Reading from the N-terminus, the 276-residue chain is NAD-capped RNA hydrolase NudC (276 aa).

Substrate is bound at residue Arg82. Zn(2+) contacts are provided by Cys112 and Cys115. Glu125 is a binding site for substrate. Residues Cys130 and Cys133 each coordinate Zn(2+). Tyr138 is a binding site for substrate. Residues 139 to 262 enclose the Nudix hydrolase domain; sequence PRISPSMIVL…SIARYLIDLY (124 aa). Residues Ala172, Glu188, and Glu192 each contribute to the a divalent metal cation site. Residues 173 to 194 carry the Nudix box motif; it reads GFAEPGESAEDCLVREVREEVA. 206–213 serves as a coordination point for substrate; sequence QCWPFPHS. Glu233 is a binding site for a divalent metal cation. Ala255 provides a ligand contact to substrate.

This sequence belongs to the Nudix hydrolase family. NudC subfamily. In terms of assembly, homodimer. The cofactor is Mg(2+). Mn(2+) serves as cofactor. Requires Zn(2+) as cofactor.

The enzyme catalyses a 5'-end NAD(+)-phospho-ribonucleoside in mRNA + H2O = a 5'-end phospho-adenosine-phospho-ribonucleoside in mRNA + beta-nicotinamide D-ribonucleotide + 2 H(+). It catalyses the reaction NAD(+) + H2O = beta-nicotinamide D-ribonucleotide + AMP + 2 H(+). It carries out the reaction NADH + H2O = reduced beta-nicotinamide D-ribonucleotide + AMP + 2 H(+). Functionally, mRNA decapping enzyme that specifically removes the nicotinamide adenine dinucleotide (NAD) cap from a subset of mRNAs by hydrolyzing the diphosphate linkage to produce nicotinamide mononucleotide (NMN) and 5' monophosphate mRNA. The NAD-cap is present at the 5'-end of some mRNAs and stabilizes RNA against 5'-processing. Has preference for mRNAs with a 5'-end purine. Catalyzes the hydrolysis of a broad range of dinucleotide pyrophosphates. This is NAD-capped RNA hydrolase NudC from Pseudomonas putida (strain ATCC 47054 / DSM 6125 / CFBP 8728 / NCIMB 11950 / KT2440).